Here is a 1599-residue protein sequence, read N- to C-terminus: Lacto-N-biosidase (1599 aa).

Positions 1–30 form a signal peptide, tat-type signal; that stretch reads MTSRQGRQAIAATAAMGVAVALALPTAAFA. H150 lines the beta-D-galactosyl-(1-&gt;3)-N-acetyl-D-glucosamine pocket. PbH1 repeat units lie at residues 165–190, 224–255, 277–299, 325–347, 348–388, and 389–437; these read VSYITVSNLEITNDDADVYDPIDTWK, MSNVTLDNLYIHDVDGNIYNKHMANGGIYFMA, FDHVTIRNSTVKDVDRWGIAVGY, STNVRIENNYVKGAGGDAITLMY, CDRP…WPWR, and CKDP…SFAS. The Ca(2+) site is built by D178, D179, V182, and D238. Beta-D-galactosyl-(1-&gt;3)-N-acetyl-D-glucosamine-binding residues include K244 and H245. 4 residues coordinate beta-D-galactosyl-(1-&gt;3)-N-acetyl-D-glucosamine: W387, D411, D418, and C441. Residue D411 is the Proton donor/acceptor of the active site. D418 serves as the catalytic Nucleophile. One copy of the PbH1 7 repeat lies at 469-506; the sequence is GPGNHIYNNTVYVDADSQVLTKRSNSQSLFENNIFINA. In terms of domain architecture, FIVAR spans 1436 to 1498; the sequence is DKSTLKATVE…NALRDAIDGL (63 aa). The span at 1494 to 1509 shows a compositional bias: basic and acidic residues; it reads AIDGLEKKPVDPDPNP. Residues 1494–1568 are disordered; that stretch reads AIDGLEKKPV…DGATTGGKLT (75 aa). Residues 1535-1558 show a composition bias toward gly residues; it reads DGSGNGSGTGNGSGSGNGSTGSGS. The span at 1559–1568 shows a compositional bias: low complexity; the sequence is DGATTGGKLT. A helical transmembrane segment spans residues 1574-1594; that stretch reads VAGAAAMVALTAAAGIGLAAA.

The protein belongs to the glycosyl hydrolase 136 (GH136) family. As to quaternary structure, homodimer. Ca(2+) is required as a cofactor. The cofactor is Mg(2+). Post-translationally, predicted to be exported by the Tat system. The position of the signal peptide cleavage has not been experimentally proven.

The protein localises to the cell membrane. The catalysed reaction is beta-D-Gal-(1-&gt;3)-beta-D-GlcNAc-(1-&gt;3)-beta-D-Gal-(1-&gt;4)-D-Glc + H2O = beta-D-galactosyl-(1-&gt;3)-N-acetyl-D-glucosamine + lactose. With respect to regulation, requires the chaperone LnbY for its proper folding and active expression. Is potently and competitively inhibited by LNB-PUGNAc and LNB-NHAcDNJ in vitro. Present in the infant gut, this enzyme is involved in the assimilation of type-1 human milk oligosaccharides (HMOs). It hydrolyzes via a retaining mechanism the beta-D-GlcNAc-(1-&gt;3)-beta-D-Gal linkage in lacto-N-tetraose (LNT or beta-D-Gal-(1-&gt;3)-beta-D-GlcNAc-(1-&gt;3)-beta-D-Gal-(1-&gt;4)-D-Glc), an abundant HMO unique to human breast milk, releasing lacto-N-biose (LNB or beta-D-Gal-(1-&gt;3)-D-GlcNAc) and lactose. With a much lower efficiency, is also able to cleave the same linkage in lacto-N-fucopentaose I (alpha-Fuc(1-&gt;2)-beta-D-Gal-(1-&gt;3)-beta-D-GlcNAc(1-&gt;3)-beta-D-Gal-(1-&gt;4)-D-Glc), and sialyllacto-N-tetraose a (alpha-Neu5Ac-(2-&gt;3)-beta-D-Gal-(1-&gt;3)-beta-D-GlcNAc-(1-&gt;3)-beta-D-Gal-(1-&gt;4)-D-Glc). Is a key enzymatic factor for growth and proliferation of B.longum in the gut ecosystem of breast-fed infants. The polypeptide is Lacto-N-biosidase (Bifidobacterium longum subsp. longum (strain ATCC 15707 / DSM 20219 / JCM 1217 / NCTC 11818 / E194b)).